The chain runs to 505 residues: L-carnitine/gamma-butyrobetaine antiporter (505 aa).

12 consecutive transmembrane segments (helical) span residues 10-30, 51-71, 92-112, 143-163, 195-215, 231-251, 263-283, 316-336, 347-367, 403-423, 446-466, and 475-495; these read IEPKVFFPPLIIVGILCWLTV, WGWAFEWYMIVMLFGWFWLVF, IFMMFASCTSAAVLFWGSIEI, GPLPWATYSFLSVAFAYFFFV, FYLVALIFAMGTSLGLATPLV, LDAIIITCWIILNAICVACGL, SYLSFLMLGWVFIVSGASFIM, WTVFYWAWWVIYAIQMSIFLA, LCFGMVMGLTASTWILWTVLG, LSTATMWGFFILCFIATVTLI, LLVRIGWSVLVGIIGIVLLAL, and AIIAGGCPLFFVNIMVTLSFI.

This sequence belongs to the BCCT transporter (TC 2.A.15) family. CaiT subfamily. As to quaternary structure, homotrimer.

The protein localises to the cell inner membrane. It carries out the reaction 4-(trimethylamino)butanoate(in) + (R)-carnitine(out) = 4-(trimethylamino)butanoate(out) + (R)-carnitine(in). It functions in the pathway amine and polyamine metabolism; carnitine metabolism. In terms of biological role, catalyzes the exchange of L-carnitine for gamma-butyrobetaine. This Salmonella paratyphi A (strain ATCC 9150 / SARB42) protein is L-carnitine/gamma-butyrobetaine antiporter.